We begin with the raw amino-acid sequence, 53 residues long: Metallocarboxypeptidase inhibitor (53 aa).

Disulfide bonds link Cys9-Cys23, Cys15-Cys51, and Cys27-Cys38. Ala53 lines the Zn(2+) pocket.

Monomer. Interacts (via C-terminus) with human CPA4.

Metallocarboxypeptidase inhibitor. Has an inhibitory effect on bovine CPA1 and CPB2, human CPA1, CPA2, CPA4, CPB1 and CPB2, and porcine CPB1. Does not inhibit D.melanogaster svr (carboxypeptidase D). Shows no activity against serine proteases subtilisin or bovine trypsin, cysteine protease papain, and aspartyl protease porcine pepsin. This is Metallocarboxypeptidase inhibitor from Nerita versicolor (Four-tooth nerite).